The following is a 285-amino-acid chain: 3-methyl-2-oxobutanoate hydroxymethyltransferase (285 aa).

The disordered stretch occupies residues 1–22 (MSEHNVYGAAQPAQPGQPAQPR). A compositionally biased stretch (low complexity) spans 8–21 (GAAQPAQPGQPAQP). Mg(2+)-binding residues include Asp66 and Asp105. Residues 66–67 (DS), Asp105, and Lys135 each bind 3-methyl-2-oxobutanoate. Glu137 contacts Mg(2+). The Proton acceptor role is filled by Glu203.

This sequence belongs to the PanB family. Homodecamer; pentamer of dimers. It depends on Mg(2+) as a cofactor.

The protein localises to the cytoplasm. The enzyme catalyses 3-methyl-2-oxobutanoate + (6R)-5,10-methylene-5,6,7,8-tetrahydrofolate + H2O = 2-dehydropantoate + (6S)-5,6,7,8-tetrahydrofolate. The protein operates within cofactor biosynthesis; (R)-pantothenate biosynthesis; (R)-pantoate from 3-methyl-2-oxobutanoate: step 1/2. Its function is as follows. Catalyzes the reversible reaction in which hydroxymethyl group from 5,10-methylenetetrahydrofolate is transferred onto alpha-ketoisovalerate to form ketopantoate. In Mycolicibacterium paratuberculosis (strain ATCC BAA-968 / K-10) (Mycobacterium paratuberculosis), this protein is 3-methyl-2-oxobutanoate hydroxymethyltransferase.